The following is an 80-amino-acid chain: Metallothionein-like protein type 2 (80 aa).

It belongs to the metallothionein superfamily. Type 15 family.

Its function is as follows. Metallothioneins have a high content of cysteine residues that bind various heavy metals. This chain is Metallothionein-like protein type 2 (MTI), found in Ricinus communis (Castor bean).